We begin with the raw amino-acid sequence, 355 residues long: UDP-N-acetylglucosamine--N-acetylmuramyl-(pentapeptide) pyrophosphoryl-undecaprenol N-acetylglucosamine transferase (355 aa).

UDP-N-acetyl-alpha-D-glucosamine is bound by residues 15 to 17 (TGG), Asn-127, Arg-163, Ser-191, Ile-244, 263 to 268 (ALTVSE), and Gln-288.

Belongs to the glycosyltransferase 28 family. MurG subfamily.

The protein localises to the cell inner membrane. The catalysed reaction is di-trans,octa-cis-undecaprenyl diphospho-N-acetyl-alpha-D-muramoyl-L-alanyl-D-glutamyl-meso-2,6-diaminopimeloyl-D-alanyl-D-alanine + UDP-N-acetyl-alpha-D-glucosamine = di-trans,octa-cis-undecaprenyl diphospho-[N-acetyl-alpha-D-glucosaminyl-(1-&gt;4)]-N-acetyl-alpha-D-muramoyl-L-alanyl-D-glutamyl-meso-2,6-diaminopimeloyl-D-alanyl-D-alanine + UDP + H(+). It functions in the pathway cell wall biogenesis; peptidoglycan biosynthesis. Functionally, cell wall formation. Catalyzes the transfer of a GlcNAc subunit on undecaprenyl-pyrophosphoryl-MurNAc-pentapeptide (lipid intermediate I) to form undecaprenyl-pyrophosphoryl-MurNAc-(pentapeptide)GlcNAc (lipid intermediate II). The protein is UDP-N-acetylglucosamine--N-acetylmuramyl-(pentapeptide) pyrophosphoryl-undecaprenol N-acetylglucosamine transferase of Escherichia coli O45:K1 (strain S88 / ExPEC).